The chain runs to 616 residues: Leucine aminopeptidase (616 aa).

Residues 128–130 (QCQ) and 282–286 (GGMEN) contribute to the substrate site. Position 309 (histidine 309) interacts with Zn(2+). Glutamate 310 (proton acceptor) is an active-site residue. Histidine 313 and glutamate 332 together coordinate Zn(2+). The Proton donor role is filled by tyrosine 397. Position 566–568 (566–568 (RMK)) interacts with substrate.

It belongs to the peptidase M1 family. The cofactor is Zn(2+).

Its subcellular location is the cytoplasm. The catalysed reaction is an epoxide + H2O = an ethanediol. Aminopeptidase that preferentially cleaves di- and tripeptides. Also has low epoxide hydrolase activity (in vitro). Can hydrolyze the epoxide leukotriene LTA(4) but it forms preferentially 5,6-dihydroxy-7,9,11,14-eicosatetraenoic acid rather than the cytokine leukotriene B(4) as the product compared to the homologous mammalian enzyme (in vitro). The chain is Leucine aminopeptidase (LKHA4) from Arabidopsis thaliana (Mouse-ear cress).